The sequence spans 406 residues: Bifunctional enzyme IspD/IspF (406 aa).

The tract at residues 1 to 247 (MSLIRVNGEA…TLFFNPAKDT (247 aa)) is 2-C-methyl-D-erythritol 4-phosphate cytidylyltransferase. The interval 248–406 (FIGMGFDTHA…HVSMRYKQKL (159 aa)) is 2-C-methyl-D-erythritol 2,4-cyclodiphosphate synthase. A divalent metal cation contacts are provided by Asp254 and His256. 4-CDP-2-C-methyl-D-erythritol 2-phosphate is bound by residues 254-256 (DTH) and 280-281 (HS). His288 contributes to the a divalent metal cation binding site. 4-CDP-2-C-methyl-D-erythritol 2-phosphate contacts are provided by residues 302–304 (DIG), 307–311 (FPDND), 378–381 (TTME), Phe385, and Lys388.

In the N-terminal section; belongs to the IspD/TarI cytidylyltransferase family. IspD subfamily. This sequence in the C-terminal section; belongs to the IspF family. The cofactor is a divalent metal cation.

It catalyses the reaction 2-C-methyl-D-erythritol 4-phosphate + CTP + H(+) = 4-CDP-2-C-methyl-D-erythritol + diphosphate. The catalysed reaction is 4-CDP-2-C-methyl-D-erythritol 2-phosphate = 2-C-methyl-D-erythritol 2,4-cyclic diphosphate + CMP. It participates in isoprenoid biosynthesis; isopentenyl diphosphate biosynthesis via DXP pathway; isopentenyl diphosphate from 1-deoxy-D-xylulose 5-phosphate: step 2/6. Its pathway is isoprenoid biosynthesis; isopentenyl diphosphate biosynthesis via DXP pathway; isopentenyl diphosphate from 1-deoxy-D-xylulose 5-phosphate: step 4/6. Functionally, bifunctional enzyme that catalyzes the formation of 4-diphosphocytidyl-2-C-methyl-D-erythritol from CTP and 2-C-methyl-D-erythritol 4-phosphate (MEP) (IspD), and catalyzes the conversion of 4-diphosphocytidyl-2-C-methyl-D-erythritol 2-phosphate (CDP-ME2P) to 2-C-methyl-D-erythritol 2,4-cyclodiphosphate (ME-CPP) with a corresponding release of cytidine 5-monophosphate (CMP) (IspF). The protein is Bifunctional enzyme IspD/IspF of Helicobacter pylori (strain ATCC 700392 / 26695) (Campylobacter pylori).